The primary structure comprises 594 residues: Acyl-coenzyme A thioesterase 11 (594 aa).

A mitochondrion-targeting transit peptide spans 1–20 (MIQNVGNHLRRGFASMFSNR). Residues serine 15 and serine 25 each carry the phosphoserine modification. The tract at residues 20–43 (RTSRKSISHPESGDPPTMAEGEGY) is disordered. In terms of domain architecture, HotDog ACOT-type 1 spans 45–157 (NPTEVQMSQL…LATFVAHREL (113 aa)). CoA is bound by residues 93–95 (TAS), 122–124 (NSS), arginine 183, and 272–274 (HFR). The 114-residue stretch at 217 to 330 (EKTRVESVEL…FMTFVVLDKD (114 aa)) folds into the HotDog ACOT-type 2 domain. The START domain maps to 370-582 (KQAEVALSVP…FKACESFLLD (213 aa)).

Its subcellular location is the mitochondrion matrix. The protein resides in the cytoplasm. The enzyme catalyses hexadecanoyl-CoA + H2O = hexadecanoate + CoA + H(+). It carries out the reaction tetradecanoyl-CoA + H2O = tetradecanoate + CoA + H(+). The catalysed reaction is dodecanoyl-CoA + H2O = dodecanoate + CoA + H(+). It catalyses the reaction butanoyl-CoA + H2O = butanoate + CoA + H(+). The protein operates within lipid metabolism; fatty acid metabolism. Its function is as follows. Has an acyl-CoA thioesterase activity with a preference for the long chain fatty acyl-CoA thioesters hexadecanoyl-CoA/palmitoyl-CoA and tetradecanoyl-CoA/myristoyl-CoA which are the main substrates in the mitochondrial beta-oxidation pathway. The chain is Acyl-coenzyme A thioesterase 11 (Acot11) from Mus musculus (Mouse).